We begin with the raw amino-acid sequence, 450 residues long: TATA box-binding protein-associated factor RNA polymerase I subunit A (450 aa).

As to quaternary structure, component of the transcription factor SL1/TIF-IB complex, composed of TBP and at least TAF1A, TAF1B, TAF1C and TAF1D. In the complex interacts directly with TBP, TAF1A and TAF1B. Interaction of the SL1/TIF-IB subunits with TBP excludes interaction of TBP with the transcription factor IID (TFIID) subunits. Interacts with UBFT. Interacts with CEBPA (isoform 1 and isoform 4). Part of Pol I pre-initiation complex (PIC), in which Pol I core assembles with RRN3 and promoter-bound UTBF and SL1/TIF-IB complex.

It is found in the nucleus. The protein localises to the nucleolus. Its function is as follows. Component of the transcription factor SL1/TIF-IB complex, which is involved in the assembly of the PIC (pre-initiation complex) during RNA polymerase I-dependent transcription. The rate of PIC formation probably is primarily dependent on the rate of association of SL1/TIF-IB with the rDNA promoter. SL1/TIF-IB is involved in stabilization of nucleolar transcription factor 1/UBTF on rDNA. Formation of SL1/TIF-IB excludes the association of TBP with TFIID subunits. This chain is TATA box-binding protein-associated factor RNA polymerase I subunit A (TAF1A), found in Homo sapiens (Human).